The following is an 859-amino-acid chain: MQEQYNPSEIEALVQKHWHDNKTFEVTEDANKEKFYCLSMFPYPSGRLHMGHVRNYTIGDVVARFQRLQGKNVLQPIGWDSFGLPAENAAINNKTAPAPWTYENIEYMKNQLKLLGFGYDWSREIATCTPEYYRWEQWFFTKLYEKGLVYKKTASVNWCPNDETVLANEQVQDGCCWRCDTPVEQKEIPQWFIKITAYAEELLNDIDTLDGWPEQVKTMQRNWIGRSEGVEMTFGVAGHDKTFDIYTTRPDTLMGVTYVAIAAGHPLAEIAAQTNPELAAFIDECKNSTTSEAELATMEKRGVATGLFAIHPITGKQVPIWAANFVLMNYGTGAVMSVPGHDQRDFEFAKKYGLAIEAVIKPVDGDVDISEAAYTEKGILFNSGEFDGLDFEAGFNAIANKLVAEGKGKRQVNYRLRDWGVSRQRYWGAPIPMVTLADGTVIPTPADQLPVLLPEDVVMDGIQSPIKADKEWAKTQVNGQDALRETDTFDTFMESSWYYARYCSPQADEMLDPAKANYWLPVDQYIGGIEHACMHLLYFRFFHKLLRDAGLVNSNEPAKQLLTQGMVLADAFYYINEKGARVWVSPLDVATTEKDDKGRITKAIDKDGNELVYTGMCKMSKSKNNGIDPQVMVEKYGADTVRLFMMFASPPELTLEWQESGVEGAHRFIKRLWKLASEYIAQDNSEALDVSKLTSEQKALRREVHKTIAKVTDDIGRRQMFNTAVAAVMELMNHLQKAPQTTGQDRAIIGEALSAVMRLLYPIIPHVSFTLWNDLGNTGSIEDSQWPVVDESALVEDSKLIVVQVNGKVRAKITVAADADKDSVEALGMNDEHVIKYLDGLTVRKVIYVPGKLLSIVAN.

The 'HIGH' region motif lies at 42 to 52 (PYPSGRLHMGH). Residues 618 to 622 (KMSKS) carry the 'KMSKS' region motif. Residue lysine 621 coordinates ATP.

It belongs to the class-I aminoacyl-tRNA synthetase family.

The protein resides in the cytoplasm. It catalyses the reaction tRNA(Leu) + L-leucine + ATP = L-leucyl-tRNA(Leu) + AMP + diphosphate. The polypeptide is Leucine--tRNA ligase (Shewanella putrefaciens (strain CN-32 / ATCC BAA-453)).